The chain runs to 321 residues: UPF0676 protein C1494.01 (321 aa).

The 109-residue stretch at 159-267 (EEDVLRLLKY…RQTIAYFVTP (109 aa)) folds into the Fe2OG dioxygenase domain.

Belongs to the UPF0676 family.

The protein resides in the cytoplasm. The protein localises to the nucleus. This is UPF0676 protein C1494.01 from Schizosaccharomyces pombe (strain 972 / ATCC 24843) (Fission yeast).